A 521-amino-acid polypeptide reads, in one-letter code: uncharacterized protein (521 aa).

Transmembrane regions (helical) follow at residues asparagine 103–proline 123, phenylalanine 136–threonine 156, tyrosine 177–tryptophan 197, isoleucine 200–phenylalanine 220, alanine 259–valine 279, isoleucine 299–isoleucine 319, tyrosine 327–arginine 346, phenylalanine 358–methionine 378, cysteine 411–glycine 431, and phenylalanine 450–leucine 470.

The protein resides in the membrane. This is an uncharacterized protein from Schizosaccharomyces pombe (strain 972 / ATCC 24843) (Fission yeast).